Reading from the N-terminus, the 382-residue chain is MHGRRHLAASLARALTYAPSRSISSTPSLLQTLDPSTPSPAAAPPTAGRLAELRQRLQADAPSLGDFTYSVEVGTRKKPLPKPKWMKETIPGGAKYAGIKAKLRELKLHTVCEEARCPNLGECWSGGETGTATATIMILGDTCTRGCRFCNVKTSRTPPPPDPDEPSNVAQAIASWGLEYIVITSVDRDDLPDQGSGHFAETVQKLKVLKPEMLIEALVPDFRGDPACVEKVATSGLHVFAHNIETVEELQRNVRDHRANFKQSIDVLKLAKEYAPAGTLTKTSIMLGCGETPDQVISTMEKVRAAGVDVMTFGQYMRPSKRHMPVSEYVTPEAFERYRSLGVDMGFRYVASGPMVRSSYKAGEFYIKAMIEADRAKATTAI.

A mitochondrion-targeting transit peptide spans 1–30 (MHGRRHLAASLARALTYAPSRSISSTPSLL). Positions 25–34 (STPSLLQTLD) are enriched in polar residues. The segment at 25–47 (STPSLLQTLDPSTPSPAAAPPTA) is disordered. [4Fe-4S] cluster is bound by residues cysteine 112, cysteine 117, cysteine 123, cysteine 143, cysteine 147, cysteine 150, and serine 359. The region spanning 128–348 (ETGTATATIM…RSLGVDMGFR (221 aa)) is the Radical SAM core domain.

This sequence belongs to the radical SAM superfamily. Lipoyl synthase family. The cofactor is [4Fe-4S] cluster.

Its subcellular location is the mitochondrion. The catalysed reaction is [[Fe-S] cluster scaffold protein carrying a second [4Fe-4S](2+) cluster] + N(6)-octanoyl-L-lysyl-[protein] + 2 oxidized [2Fe-2S]-[ferredoxin] + 2 S-adenosyl-L-methionine + 4 H(+) = [[Fe-S] cluster scaffold protein] + N(6)-[(R)-dihydrolipoyl]-L-lysyl-[protein] + 4 Fe(3+) + 2 hydrogen sulfide + 2 5'-deoxyadenosine + 2 L-methionine + 2 reduced [2Fe-2S]-[ferredoxin]. It functions in the pathway protein modification; protein lipoylation via endogenous pathway; protein N(6)-(lipoyl)lysine from octanoyl-[acyl-carrier-protein]: step 2/2. Functionally, catalyzes the radical-mediated insertion of two sulfur atoms into the C-6 and C-8 positions of the octanoyl moiety bound to the lipoyl domains of lipoate-dependent enzymes, thereby converting the octanoylated domains into lipoylated derivatives. This Oryza sativa subsp. indica (Rice) protein is Lipoyl synthase, mitochondrial.